The following is a 432-amino-acid chain: Adenosylhomocysteinase (432 aa).

Thr56, Asp131, and Glu156 together coordinate substrate. 157-159 (TTT) is an NAD(+) binding site. Substrate is bound by residues Lys186 and Asp190. NAD(+)-binding positions include Asn191, 222–227 (GDVGKG), Glu243, 299–301 (IGH), and Asn346.

Belongs to the adenosylhomocysteinase family. NAD(+) is required as a cofactor.

It carries out the reaction S-adenosyl-L-homocysteine + H2O = L-homocysteine + adenosine. The protein operates within amino-acid biosynthesis; L-homocysteine biosynthesis; L-homocysteine from S-adenosyl-L-homocysteine: step 1/1. Its function is as follows. Adenosylhomocysteine is a competitive inhibitor of S-adenosyl-L-methionine-dependent methyl transferase reactions; therefore adenosylhomocysteinase may play a key role in the control of methylations via regulation of the intracellular concentration of adenosylhomocysteine. This chain is Adenosylhomocysteinase (Ahcy13), found in Anopheles gambiae (African malaria mosquito).